The sequence spans 443 residues: Xaa-Pro dipeptidase (443 aa).

Residues Asp-246, Asp-257, His-339, Glu-384, and Glu-423 each contribute to the Mn(2+) site.

The protein belongs to the peptidase M24B family. Bacterial-type prolidase subfamily. The cofactor is Mn(2+).

The catalysed reaction is Xaa-L-Pro dipeptide + H2O = an L-alpha-amino acid + L-proline. Splits dipeptides with a prolyl residue in the C-terminal position. In Salmonella arizonae (strain ATCC BAA-731 / CDC346-86 / RSK2980), this protein is Xaa-Pro dipeptidase.